The sequence spans 310 residues: D-alanine--D-alanine ligase (310 aa).

One can recognise an ATP-grasp domain in the interval 107 to 302; it reads KQAFQAARLT…FEDLVERILA (196 aa). ATP is bound at residue 135-188; sequence EFSLPVVVKPSQEGSSVGVSIVKKESEFAAAMKEAFRYDREILVEQFIKGSEVQ. Residues aspartate 256, glutamate 269, and asparagine 271 each contribute to the Mg(2+) site.

The protein belongs to the D-alanine--D-alanine ligase family. Mg(2+) is required as a cofactor. Requires Mn(2+) as cofactor.

It is found in the cytoplasm. The enzyme catalyses 2 D-alanine + ATP = D-alanyl-D-alanine + ADP + phosphate + H(+). It functions in the pathway cell wall biogenesis; peptidoglycan biosynthesis. Cell wall formation. This is D-alanine--D-alanine ligase from Geotalea uraniireducens (strain Rf4) (Geobacter uraniireducens).